The chain runs to 154 residues: 6,7-dimethyl-8-ribityllumazine synthase (154 aa).

5-amino-6-(D-ribitylamino)uracil contacts are provided by residues Phe-22, 56-58 (AFE), and 80-82 (AVI). A (2S)-2-hydroxy-3-oxobutyl phosphate-binding site is contributed by 85–86 (AT). Residue His-88 is the Proton donor of the active site. Phe-113 contributes to the 5-amino-6-(D-ribitylamino)uracil binding site. Residue Arg-127 coordinates (2S)-2-hydroxy-3-oxobutyl phosphate.

This sequence belongs to the DMRL synthase family. As to quaternary structure, forms an icosahedral capsid composed of 60 subunits, arranged as a dodecamer of pentamers.

The enzyme catalyses (2S)-2-hydroxy-3-oxobutyl phosphate + 5-amino-6-(D-ribitylamino)uracil = 6,7-dimethyl-8-(1-D-ribityl)lumazine + phosphate + 2 H2O + H(+). It participates in cofactor biosynthesis; riboflavin biosynthesis; riboflavin from 2-hydroxy-3-oxobutyl phosphate and 5-amino-6-(D-ribitylamino)uracil: step 1/2. Functionally, catalyzes the formation of 6,7-dimethyl-8-ribityllumazine by condensation of 5-amino-6-(D-ribitylamino)uracil with 3,4-dihydroxy-2-butanone 4-phosphate. This is the penultimate step in the biosynthesis of riboflavin. The polypeptide is 6,7-dimethyl-8-ribityllumazine synthase (Anoxybacillus flavithermus (strain DSM 21510 / WK1)).